A 411-amino-acid chain; its full sequence is POU domain, class 4, transcription factor 2 (411 aa).

Residues leucine 29 to proline 95 form a disordered region. A compositionally biased stretch (low complexity) spans serine 31–asparagine 52. Composition is skewed to gly residues over residues alanine 53 to arginine 68 and glycine 76 to serine 86. The tract at residues cysteine 93–histidine 239 is required for transcriptional activation. The POU-IV box signature appears at arginine 112 to isoleucine 121. Residues serine 154–alanine 168 are compositionally biased toward low complexity. The disordered stretch occupies residues serine 154 to leucine 190. The span at threonine 172–proline 186 shows a compositional bias: basic residues. The Nuclear speckle targeting signal signature appears at histidine 173–histidine 187. Positions alanine 240–isoleucine 411 are required for DNA-binding and transcriptional repression. Positions aspartate 252 to glutamate 329 constitute a POU-specific domain. A DNA-binding region (homeobox) is located at residues lysine 347 to lysine 406.

It belongs to the POU transcription factor family. Class-4 subfamily. Isoform 2: Interacts with POU4F1 isoform 1; this interaction inhibits both POU4F1 DNA-binding and transcriptional activities. Isoform 2: Interacts (C-terminus) with ESR1 (via DNA-binding domain); this interaction increases the estrogen receptor ESR1 transcriptional activity in a DNA- and ligand 17-beta-estradiol-independent manner. Isoform 2: Interacts (via C-terminus) with TP53 (via N-terminus). Interacts with DLX1 (via homeobox DNA-binding domain); this interaction suppresses DLX1-mediated transcriptional activity in postnatal retina enhancing retinal ganglion cell (RGC) differentiation. Interacts with DLX2 (via homeobox DNA-binding domain); this interaction enhances RGC differentiation. Isoform 1: Interacts (via C-terminus) with ISL1 (via C-terminus). Isoform 1: Interacts with ISL2. Isoform 1: Interacts with LHX2. In terms of tissue distribution, expressed in retinal ganglion cells (RGCs). Expressed in mature osteoclasts. Expressed in cells of layers of the superior colliculus and the adjacent periaqueductal gray (at protein level). Expressed in the brain, peripheral sensory nervous system and retina. Expressed in the optical, intermediate, and deep gray areas of the superior colliculus, the dorsal column of the mesencephalic and pontine central gray, and the lateral interpeduncular nucleus of the brain. Expressed predominantly in postmitotic, terminally differentiated neurons. Expressed in ganglion cell layer (GCL) of the retina.

It is found in the nucleus. It localises to the nucleus speckle. Its subcellular location is the cytoplasm. Its function is as follows. Tissue-specific DNA-binding transcription factor involved in the development and differentiation of target cells. Functions either as activator or repressor by modulating the rate of target gene transcription through RNA polymerase II enzyme in a promoter-dependent manner. Binds to the consensus octamer motif 5'-AT[A/T]A[T/A]T[A/T]A-3' of promoter of target genes. Plays a fundamental role in the gene regulatory network essential for retinal ganglion cell (RGC) differentiation. Binds to an octamer site to form a ternary complex with ISL1; cooperates positively with ISL1 and ISL2 to potentiate transcriptional activation of RGC target genes being involved in RGC fate commitment in the developing retina and RGC axon formation and pathfinding. Inhibits DLX1 and DLX2 transcriptional activities preventing DLX1- and DLX2-mediated ability to promote amacrine cell fate specification. In cooperation with TP53 potentiates transcriptional activation of BAX promoter activity increasing neuronal cell apoptosis. Negatively regulates BAX promoter activity in the absence of TP53. Acts as a transcriptional coactivator via its interaction with the transcription factor ESR1 by enhancing its effect on estrogen response element (ERE)-containing promoter. Antagonizes the transcriptional stimulatory activity of POU4F1 by preventing its binding to an octamer motif. Involved in TNFSF11-mediated terminal osteoclast differentiation. This is POU domain, class 4, transcription factor 2 from Mus musculus (Mouse).